The primary structure comprises 393 residues: Phosphoglycerate kinase (393 aa).

Substrate contacts are provided by residues Asp-22 to Asn-24, Arg-37, His-60 to Arg-63, Arg-119, and Arg-152. ATP is bound by residues Lys-202, Gly-293, Glu-324, and Gly-350 to Ser-353.

This sequence belongs to the phosphoglycerate kinase family. In terms of assembly, monomer.

Its subcellular location is the cytoplasm. It carries out the reaction (2R)-3-phosphoglycerate + ATP = (2R)-3-phospho-glyceroyl phosphate + ADP. Its pathway is carbohydrate degradation; glycolysis; pyruvate from D-glyceraldehyde 3-phosphate: step 2/5. The protein is Phosphoglycerate kinase (pgk) of Borreliella burgdorferi (strain ATCC 35210 / DSM 4680 / CIP 102532 / B31) (Borrelia burgdorferi).